The chain runs to 334 residues: MPTEPYIQPMHVLNEAPILCIVGPTGAGKTHLAMSLAEHAKSIGLTIELISMDSALVYRGLDIGSAKPTKAEQDAFIHHLIDIIDPTEVYSAARFANDAKRLCLEIRERGNVPVVVGGTMLYWRAWAHGLSSLPPANSEIRARLDEEGKSIGWPAMHDKLAKVDPETAARLKPNDSQRVQRALEVFEIIGKPMSVLLADSPSEDGREGSAIPSWIDLISLEPRDRKRLHLNLEKRFDEMLTAEFMNEVKALHANTRLHTDLPAIRSVGYRQAWEFLNGEIDAEQMRYKALVATRQLGKRQLTWLRAIEGRKTFDPFNPEELKAALDYCKSNLKK.

23–30 (GPTGAGKT) contacts ATP. 25-30 (TGAGKT) serves as a coordination point for substrate. 2 interaction with substrate tRNA regions span residues 53–56 (DSAL) and 177–181 (QRVQR).

The protein belongs to the IPP transferase family. Monomer. Mg(2+) serves as cofactor.

The enzyme catalyses adenosine(37) in tRNA + dimethylallyl diphosphate = N(6)-dimethylallyladenosine(37) in tRNA + diphosphate. In terms of biological role, catalyzes the transfer of a dimethylallyl group onto the adenine at position 37 in tRNAs that read codons beginning with uridine, leading to the formation of N6-(dimethylallyl)adenosine (i(6)A). The protein is tRNA dimethylallyltransferase of Polynucleobacter necessarius subsp. necessarius (strain STIR1).